Reading from the N-terminus, the 319-residue chain is Ataxin-3 homolog (319 aa).

Residues 8 to 179 enclose the Josephin domain; it reads ISSIFFERQQ…NSEADDFITL (172 aa). Residue Cys21 is the Nucleophile of the active site. Residue His118 is the Proton acceptor of the active site. Asn133 is a catalytic residue. 2 consecutive UIM domains span residues 218 to 237 and 242 to 261; these read QEDR…KESS and SDED…DPNI. A disordered region spans residues 253 to 319; the sequence is MSLSQDPNIP…EKKSQNVPEE (67 aa). Residues 254–267 are compositionally biased toward polar residues; sequence SLSQDPNIPSTSAA. Basic and acidic residues predominate over residues 295–313; sequence QQRRDRAKFLEKLEEEKKS. An interaction with cdc-48.1 and cdc-48.2 region spans residues 297–300; the sequence is RRDR.

In terms of assembly, forms a complex composed of deubiquitinating enzyme atx-3, adapter ubxn-5 and cdc-48.1. Forms a complex composed of deubiquitinating enzyme atx-3, E4 ubiquitin-protein ligase ufd-2 and cdc-48.1. Interacts (via RRDR motif) with cdc-48.1 (via N-terminus) and cdc-48.2 (via N-terminus); the interaction with cdc-48.1 is not required for atx-3 enzymatic activity. Interacts (via C-terminus) with ubxn-5. May interact with ned-8.

Its subcellular location is the cytoplasm. The protein localises to the nucleus. It is found in the nucleolus. The enzyme catalyses Thiol-dependent hydrolysis of ester, thioester, amide, peptide and isopeptide bonds formed by the C-terminal Gly of ubiquitin (a 76-residue protein attached to proteins as an intracellular targeting signal).. Acts as a chain editing deubiquitinating enzyme that binds and cleaves 'Lys-48'-linked polyubiquitin chains, with a preference for chains containing four or more ubiquitin molecules thereby modulating protein degradation by the ubiquitin-proteasome pathway. Probably by regulating the IGF-1-insulin-like pathway, regulates lifespan. Regulates germline DNA double-strand-break repair and apoptosis in response to DNA damage by recruiting E4 ubiquitin-protein ligase ufd-2 to DNA repair foci. Interacts with key regulators of transcription and represses transcription. Acts as a histone-binding protein that regulates transcription. The sequence is that of Ataxin-3 homolog from Caenorhabditis briggsae.